Here is an 81-residue protein sequence, read N- to C-terminus: Sulfur carrier protein TusA (81 aa).

Cys19 functions as the Cysteine persulfide intermediate in the catalytic mechanism.

The protein belongs to the sulfur carrier protein TusA family.

It is found in the cytoplasm. Its function is as follows. Sulfur carrier protein which probably makes part of a sulfur-relay system. The polypeptide is Sulfur carrier protein TusA (Shewanella oneidensis (strain ATCC 700550 / JCM 31522 / CIP 106686 / LMG 19005 / NCIMB 14063 / MR-1)).